The chain runs to 458 residues: Exodeoxyribonuclease 7 large subunit (458 aa).

This sequence belongs to the XseA family. Heterooligomer composed of large and small subunits.

It is found in the cytoplasm. It catalyses the reaction Exonucleolytic cleavage in either 5'- to 3'- or 3'- to 5'-direction to yield nucleoside 5'-phosphates.. In terms of biological role, bidirectionally degrades single-stranded DNA into large acid-insoluble oligonucleotides, which are then degraded further into small acid-soluble oligonucleotides. The protein is Exodeoxyribonuclease 7 large subunit of Yersinia pseudotuberculosis serotype O:1b (strain IP 31758).